We begin with the raw amino-acid sequence, 68 residues long: MKAKEIRELTTAEIEQKIKALKEELFNLRFQLATGQLENTARIRQVRKDIARMKTIIREREIAANAKK.

This sequence belongs to the universal ribosomal protein uL29 family.

The sequence is that of Large ribosomal subunit protein uL29 from Geobacillus sp. (strain WCH70).